Here is a 269-residue protein sequence, read N- to C-terminus: MTNQKISRDVHHLAHRMSGFQESSRIVPEEAPIAMSYNGTTQAVMMATPGDLEDFAIGFSLTENIVTRIEEIEALDIVAFESGIDIQMKLAKQPEQRLSARRRFMAGQVGCGLCGIDSIEQALRPLHPLEECSTTFTTRDIAAAVASLGAAQALNAKTHATHGAGFFRPGEGLFAVREDIGRHNALDKLIGAVAREGLLAEEGIVAITSRVSVEMVQKAVMLGVPVLAAISAPTALAIRTAEAANLTLVALVRDEEFDIYTHCGRIIEG.

Residue cysteine 111 is the Cysteine persulfide intermediate of the active site.

It belongs to the FdhD family.

The protein localises to the cytoplasm. In terms of biological role, required for formate dehydrogenase (FDH) activity. Acts as a sulfur carrier protein that transfers sulfur from IscS to the molybdenum cofactor prior to its insertion into FDH. The sequence is that of Sulfur carrier protein FdhD from Brucella melitensis biotype 1 (strain ATCC 23456 / CCUG 17765 / NCTC 10094 / 16M).